Reading from the N-terminus, the 335-residue chain is MNLAKRILQGEQLTKETVLKIYEDTNIDTLDLLNEAYILRKHYFGKKVKLNMILNAKSGICPENCGYCGQSRDIKQKQRYALIPEEQIIDGAKVAHDNHIGTYCIVMSGRGPSDKEVDHISNTVRTIKSQHPQLKICACLGLTNDEQAKKLKSAGVDRYNHNINTSENYHDNVVTTHSYKDRTDTIELMKANNISPCSGVICGMGESNQDIVDMAFALKEMDADSIPINFLHPIKGTKFGSMDDLTPMKCLRIVALFRLINPTKEIRIAGGREVNLRSLQPLALKAANSIFVGDYLITGGQPNQLDYDMINDLGFEIDYDTCENKENKNEVSRAN.

The Radical SAM core domain occupies 43-269; it reads YFGKKVKLNM…INPTKEIRIA (227 aa). [4Fe-4S] cluster is bound by residues C61, C65, and C68. [2Fe-2S] cluster contacts are provided by C104, C137, C197, and R267.

This sequence belongs to the radical SAM superfamily. Biotin synthase family. Homodimer. Requires [4Fe-4S] cluster as cofactor. It depends on [2Fe-2S] cluster as a cofactor.

It carries out the reaction (4R,5S)-dethiobiotin + (sulfur carrier)-SH + 2 reduced [2Fe-2S]-[ferredoxin] + 2 S-adenosyl-L-methionine = (sulfur carrier)-H + biotin + 2 5'-deoxyadenosine + 2 L-methionine + 2 oxidized [2Fe-2S]-[ferredoxin]. The protein operates within cofactor biosynthesis; biotin biosynthesis; biotin from 7,8-diaminononanoate: step 2/2. Its function is as follows. Catalyzes the conversion of dethiobiotin (DTB) to biotin by the insertion of a sulfur atom into dethiobiotin via a radical-based mechanism. This Staphylococcus aureus (strain USA300) protein is Biotin synthase.